A 545-amino-acid polypeptide reads, in one-letter code: 1,3-beta-glucanosyltransferase ARB_07487 (545 aa).

Positions methionine 1–alanine 19 are cleaved as a signal peptide. 2 N-linked (GlcNAc...) asparagine glycosylation sites follow: asparagine 51 and asparagine 69. A disulfide bridge links cysteine 88 with cysteine 117. Residues tyrosine 106, serine 133 to arginine 141, asparagine 174, and glutamate 175 contribute to the (1,3-beta-D-glucosyl)n site. Glutamate 175 serves as the catalytic Proton donor. Asparagine 179 carries an N-linked (GlcNAc...) asparagine glycan. (1,3-beta-D-glucosyl)n-binding residues include aspartate 216 and arginine 221. 5 disulfide bridges follow: cysteine 230-cysteine 363, cysteine 248-cysteine 279, cysteine 384-cysteine 437, cysteine 393-cysteine 464, and cysteine 412-cysteine 419. Glutamate 276 (nucleophile) is an active-site residue. Tyrosine 308 contributes to the (1,3-beta-D-glucosyl)n binding site. A disordered region spans residues glycine 493 to alanine 513. The GPI-anchor amidated alanine moiety is linked to residue alanine 512. Positions alanine 513–isoleucine 545 are cleaved as a propeptide — removed in mature form.

This sequence belongs to the glycosyl hydrolase 72 family. The GPI-anchor is attached to the protein in the endoplasmic reticulum and serves to target the protein to the cell surface. There, the glucosamine-inositol phospholipid moiety is cleaved off and the GPI-modified mannoprotein is covalently attached via its lipidless GPI glycan remnant to the 1,6-beta-glucan of the outer cell wall layer.

Its subcellular location is the secreted. The protein resides in the cell membrane. It localises to the cell wall. Functionally, splits internally a 1,3-beta-glucan molecule and transfers the newly generated reducing end (the donor) to the non-reducing end of another 1,3-beta-glucan molecule (the acceptor) forming a 1,3-beta linkage, resulting in the elongation of 1,3-beta-glucan chains in the cell wall. Involved in cell wall biosynthesis and morphogenesis. This Arthroderma benhamiae (strain ATCC MYA-4681 / CBS 112371) (Trichophyton mentagrophytes) protein is 1,3-beta-glucanosyltransferase ARB_07487.